The primary structure comprises 375 residues: OVARIAN TUMOR DOMAIN-containing deubiquitinating enzyme 7 (375 aa).

The segment covering 1-18 (MAKTKQQKSKPKKQPHQK) has biased composition (basic residues). Residues 1–23 (MAKTKQQKSKPKKQPHQKQGKDC) form a disordered region. The OTU domain occupies 37 to 161 (LKIIQVTADG…GEHYNSVRSK (125 aa)). Asp-45 is an active-site residue. The Nucleophile role is filled by Cys-48. Residue His-154 is part of the active site. Residues 202 to 250 (HVNAGAIKVVMSGSCCDNTEKAEQVLLQVNGDVDAAIEFLIADQGMESL) form the UBA-like domain. Composition is skewed to polar residues over residues 251 to 264 (TEND…SDTI) and 290 to 305 (ASGN…CTTQ). The disordered stretch occupies residues 251–306 (TENDTETASASDTINPKHASDSPMENTEQAREELIEEESASGNNSETVQAKCTTQT). The short motif at 308-315 (DKKIPRNK) is the Nuclear localization signal element.

It belongs to the peptidase C85 family.

Its subcellular location is the nucleus. The catalysed reaction is Thiol-dependent hydrolysis of ester, thioester, amide, peptide and isopeptide bonds formed by the C-terminal Gly of ubiquitin (a 76-residue protein attached to proteins as an intracellular targeting signal).. Functionally, hydrolase that can remove conjugated ubiquitin from proteins in vitro and may therefore play an important regulatory role at the level of protein turnover by preventing degradation. Cysteine protease with a preference for 'Lys-63' over 'Lys-48' over 'Met-1' -linked ubiquitin (UB) tetramers as substrates. Also cleaves RUB-GST fusion. In Arabidopsis thaliana (Mouse-ear cress), this protein is OVARIAN TUMOR DOMAIN-containing deubiquitinating enzyme 7.